Consider the following 97-residue polypeptide: Cobalt transport protein CbiN (97 aa).

2 helical membrane-spanning segments follow: residues 6–26 (VLMI…YSGL) and 68–88 (SLLF…FFGY).

This sequence belongs to the CbiN family. Forms an energy-coupling factor (ECF) transporter complex composed of an ATP-binding protein (A component, CbiO), a transmembrane protein (T component, CbiQ) and 2 possible substrate-capture proteins (S components, CbiM and CbiN) of unknown stoichimetry.

Its subcellular location is the cell membrane. Its pathway is cofactor biosynthesis; adenosylcobalamin biosynthesis. In terms of biological role, part of the energy-coupling factor (ECF) transporter complex CbiMNOQ involved in cobalt import. This Methanococcus maripaludis (strain C6 / ATCC BAA-1332) protein is Cobalt transport protein CbiN.